Reading from the N-terminus, the 695-residue chain is NAD(P)H-quinone oxidoreductase subunit 5, chloroplastic (695 aa).

15 helical membrane passes run 1–21 (WIIP…LILF), 32–52 (WAFQ…YLSI), 81–101 (IDPL…MVLI), 117–137 (FAYM…SNLI), 139–159 (IYIF…FWFT), 177–197 (GDFG…SFEF), 211–231 (NEVN…GAVA), 250–270 (TPIS…FLVA), 278–298 (VIPY…LLGA), 319–339 (LGYM…FHLI), 346–366 (ALLF…VGYS), 388–408 (ITFL…CFWS), 417–437 (WLYS…TAFY), 535–555 (LFPI…GIPF), and 594–614 (VLSV…YKPI).

Belongs to the complex I subunit 5 family. NDH is composed of at least 16 different subunits, 5 of which are encoded in the nucleus.

It localises to the plastid. The protein resides in the chloroplast thylakoid membrane. The catalysed reaction is a plastoquinone + NADH + (n+1) H(+)(in) = a plastoquinol + NAD(+) + n H(+)(out). The enzyme catalyses a plastoquinone + NADPH + (n+1) H(+)(in) = a plastoquinol + NADP(+) + n H(+)(out). Its function is as follows. NDH shuttles electrons from NAD(P)H:plastoquinone, via FMN and iron-sulfur (Fe-S) centers, to quinones in the photosynthetic chain and possibly in a chloroplast respiratory chain. The immediate electron acceptor for the enzyme in this species is believed to be plastoquinone. Couples the redox reaction to proton translocation, and thus conserves the redox energy in a proton gradient. The sequence is that of NAD(P)H-quinone oxidoreductase subunit 5, chloroplastic (ndhF) from Capsicum baccatum (Peruvian pepper).